The primary structure comprises 309 residues: Probable L,D-transpeptidase ErfK/SrfK (309 aa).

A signal peptide spans 1–21 (MRRITPFFPFFVLLVSHFSLA). The L,D-TPase catalytic domain occupies 96-231 (EGIVVNVAEM…VPVGTRVQII (136 aa)). Histidine 191 (proton donor/acceptor) is an active-site residue. Cysteine 207 serves as the catalytic Nucleophile.

The protein belongs to the YkuD family.

The protein localises to the periplasm. It participates in cell wall biogenesis; peptidoglycan biosynthesis. This Salmonella typhimurium (strain LT2 / SGSC1412 / ATCC 700720) protein is Probable L,D-transpeptidase ErfK/SrfK (erfK).